The sequence spans 468 residues: MITTRFAPSPTGFLHVGGVRTALFSWLYAKNNNGKFILRIEDTDLERSTQEAVDAILDGMSWLGLKNDGEIYYQTKRFDRYKEVIQELIADGKAYYCSCSKERLEELREYQQANNLKTGYDGKCRDANYVPQQGESYVVRFKNPQDGVVSWDDAVKGRISISNHELDDMIIQRADGSPTYNFCVVVDDIDMAITHIIRGDDHVNNTPKQINIYKALNANVPVFAHVPMILGPDGAKLSKRHGAVNVMQYREDGYLPQAILNYLVRLGWSHGDQEIFSIEEMIKAFNLEHINASPSRFDFEKLKWLNKHYIKESKFDDIQTEVEYHFAKTGLDISNGPDLKELVAVMAEKVDTLVELAEKSSYFYSDDISYDENAVKKHIKASTGEIFVKLLENFEALDAQQWQDPDVLHNIVSTTAEQCQVGMGKVGMPLRVAITGSGQSPDIGITLKLLGKNKVVARLTKALEELCK.

Residues 8–18 carry the 'HIGH' region motif; it reads PSPTGFLHVGG. Zn(2+) contacts are provided by cysteine 97, cysteine 99, cysteine 124, and aspartate 126. The 'KMSKS' region signature appears at 236 to 240; sequence KLSKR. Lysine 239 is an ATP binding site.

This sequence belongs to the class-I aminoacyl-tRNA synthetase family. Glutamate--tRNA ligase type 1 subfamily. In terms of assembly, monomer. Zn(2+) is required as a cofactor.

It is found in the cytoplasm. The catalysed reaction is tRNA(Glu) + L-glutamate + ATP = L-glutamyl-tRNA(Glu) + AMP + diphosphate. Catalyzes the attachment of glutamate to tRNA(Glu) in a two-step reaction: glutamate is first activated by ATP to form Glu-AMP and then transferred to the acceptor end of tRNA(Glu). The protein is Glutamate--tRNA ligase of Francisella tularensis subsp. novicida (strain U112).